The primary structure comprises 374 residues: Putative C-&gt;U-editing enzyme APOBEC-4 (374 aa).

Positions 60–176 (PQTKHLTFYE…AWNRKALQSL (117 aa)) constitute a CMP/dCMP-type deaminase domain. His92 contributes to the Zn(2+) binding site. Catalysis depends on Glu94, which acts as the Proton donor. Residues Cys126 and Cys133 each coordinate Zn(2+). The interval 259 to 280 (EKHPLGSAAPAQRQPTRGQDPR) is disordered.

It belongs to the cytidine and deoxycytidylate deaminase family. It depends on Zn(2+) as a cofactor. As to expression, predominantly expressed in testis.

Functionally, putative C to U editing enzyme whose physiological substrate is not yet known. The chain is Putative C-&gt;U-editing enzyme APOBEC-4 (Apobec4) from Mus musculus (Mouse).